The primary structure comprises 178 residues: MSRIGYKVIELPAGVEVSQAGEVVTVKGPKGTLTRNIASDITMTVEGNEVKFTRPSDDYKMKALHGTTRANVNNMVEGVTKGFTKNLQLVGVGYRAQLQGKKLVLSVGYSHPVEFATPENLTVEVPDNTHINISGIGKQAVGDFAAEVRAVRSPEPYKGKGIRYVDEYVRRKEGKTGK.

The protein belongs to the universal ribosomal protein uL6 family. As to quaternary structure, part of the 50S ribosomal subunit.

In terms of biological role, this protein binds to the 23S rRNA, and is important in its secondary structure. It is located near the subunit interface in the base of the L7/L12 stalk, and near the tRNA binding site of the peptidyltransferase center. This chain is Large ribosomal subunit protein uL6, found in Lactiplantibacillus plantarum (strain ATCC BAA-793 / NCIMB 8826 / WCFS1) (Lactobacillus plantarum).